We begin with the raw amino-acid sequence, 79 residues long: Large ribosomal subunit protein bL28 (79 aa).

It belongs to the bacterial ribosomal protein bL28 family.

The protein is Large ribosomal subunit protein bL28 of Christiangramia forsetii (strain DSM 17595 / CGMCC 1.15422 / KT0803) (Gramella forsetii).